A 194-amino-acid chain; its full sequence is MASSTLSSLSSTPLQHSFAANLKTCSQFPNKSSGFMVFAQKKTKKTRKIILKEDIVNVGKKGELLDVRVGFFRNFLFPSGKAQLVTPGVLKEMKIEEERIEAEKRRVLEEAQQLALFFETFGAFKVKRKGGKGKQIFGSVTAQDLVDIIKAQLQREVDKRIVNLPEIRETGEYIAELKLHPDVTAKVRVNVIAN.

A chloroplast-targeting transit peptide spans 1–39 (MASSTLSSLSSTPLQHSFAANLKTCSQFPNKSSGFMVFA).

Belongs to the bacterial ribosomal protein bL9 family. In terms of assembly, part of the 50S ribosomal subunit.

Its subcellular location is the plastid. The protein resides in the chloroplast. Functionally, binds to the 23S rRNA. In Pisum sativum (Garden pea), this protein is Large ribosomal subunit protein bL9c (RPL9).